We begin with the raw amino-acid sequence, 56 residues long: Protein hunchback (56 aa).

3 consecutive C2H2-type zinc fingers follow at residues 1-5, 11-33, and 39-56; these read HLRNH, FKCDKCSYSCVNKSMLNSHLKSH, and FRCSDCAYATKYCHSLKL.

The protein belongs to the hunchback C2H2-type zinc-finger protein family.

The protein resides in the nucleus. Gap class segmentation protein that controls development of head structures. This chain is Protein hunchback (hb), found in Euscelis plebejus (Leafhopper).